Reading from the N-terminus, the 448-residue chain is Probable glycine dehydrogenase (decarboxylating) subunit 1 (448 aa).

This sequence belongs to the GcvP family. N-terminal subunit subfamily. The glycine cleavage system is composed of four proteins: P, T, L and H. In this organism, the P 'protein' is a heterodimer of two subunits.

It carries out the reaction N(6)-[(R)-lipoyl]-L-lysyl-[glycine-cleavage complex H protein] + glycine + H(+) = N(6)-[(R)-S(8)-aminomethyldihydrolipoyl]-L-lysyl-[glycine-cleavage complex H protein] + CO2. In terms of biological role, the glycine cleavage system catalyzes the degradation of glycine. The P protein binds the alpha-amino group of glycine through its pyridoxal phosphate cofactor; CO(2) is released and the remaining methylamine moiety is then transferred to the lipoamide cofactor of the H protein. This is Probable glycine dehydrogenase (decarboxylating) subunit 1 from Staphylococcus carnosus (strain TM300).